Here is a 189-residue protein sequence, read N- to C-terminus: Peptidyl-tRNA hydrolase (189 aa).

Residue Tyr15 coordinates tRNA. His20 functions as the Proton acceptor in the catalytic mechanism. Residues Phe66, Asn68, and Asn114 each contribute to the tRNA site.

This sequence belongs to the PTH family. Monomer.

The protein resides in the cytoplasm. It catalyses the reaction an N-acyl-L-alpha-aminoacyl-tRNA + H2O = an N-acyl-L-amino acid + a tRNA + H(+). Its function is as follows. Hydrolyzes ribosome-free peptidyl-tRNAs (with 1 or more amino acids incorporated), which drop off the ribosome during protein synthesis, or as a result of ribosome stalling. Catalyzes the release of premature peptidyl moieties from peptidyl-tRNA molecules trapped in stalled 50S ribosomal subunits, and thus maintains levels of free tRNAs and 50S ribosomes. In Dichelobacter nodosus (strain VCS1703A), this protein is Peptidyl-tRNA hydrolase.